The sequence spans 396 residues: Coiled-coil domain-containing protein 1 (396 aa).

Positions Met-1–Gly-21 are cleaved as a signal peptide. Coiled coils occupy residues Lys-53–Asp-73, Glu-109–Asp-129, Asp-208–Thr-242, and Tyr-287–His-308. Residues Asp-231 to Asp-256 show a composition bias toward acidic residues. Disordered stretches follow at residues Asp-231 to His-260 and Glu-288 to Asp-378.

Component of the acid-insoluble and acid-soluble organic matrix of calcified layers of the shell (at protein level).

It localises to the secreted. This chain is Coiled-coil domain-containing protein 1, found in Lottia gigantea (Giant owl limpet).